Consider the following 335-residue polypeptide: Ketol-acid reductoisomerase (NADP(+)) 2 (335 aa).

One can recognise a KARI N-terminal Rossmann domain in the interval methionine 1–threonine 180. Residues tyrosine 24–glutamine 27, arginine 47, serine 51, and aspartate 81–glutamine 84 contribute to the NADP(+) site. The active site involves histidine 106. Glycine 132 serves as a coordination point for NADP(+). In terms of domain architecture, KARI C-terminal knotted spans threonine 181 to isoleucine 326. Mg(2+)-binding residues include aspartate 189, glutamate 193, glutamate 225, and glutamate 229. Residue serine 250 coordinates substrate.

This sequence belongs to the ketol-acid reductoisomerase family. Requires Mg(2+) as cofactor.

It carries out the reaction (2R)-2,3-dihydroxy-3-methylbutanoate + NADP(+) = (2S)-2-acetolactate + NADPH + H(+). It catalyses the reaction (2R,3R)-2,3-dihydroxy-3-methylpentanoate + NADP(+) = (S)-2-ethyl-2-hydroxy-3-oxobutanoate + NADPH + H(+). The protein operates within amino-acid biosynthesis; L-isoleucine biosynthesis; L-isoleucine from 2-oxobutanoate: step 2/4. It functions in the pathway amino-acid biosynthesis; L-valine biosynthesis; L-valine from pyruvate: step 2/4. Functionally, involved in the biosynthesis of branched-chain amino acids (BCAA). Catalyzes an alkyl-migration followed by a ketol-acid reduction of (S)-2-acetolactate (S2AL) to yield (R)-2,3-dihydroxy-isovalerate. In the isomerase reaction, S2AL is rearranged via a Mg-dependent methyl migration to produce 3-hydroxy-3-methyl-2-ketobutyrate (HMKB). In the reductase reaction, this 2-ketoacid undergoes a metal-dependent reduction by NADPH to yield (R)-2,3-dihydroxy-isovalerate. In Bacillus cereus (strain ZK / E33L), this protein is Ketol-acid reductoisomerase (NADP(+)) 2.